A 470-amino-acid polypeptide reads, in one-letter code: Nucleoporin NUP49 (470 aa).

A compositionally biased stretch (polar residues) spans 1–13; that stretch reads MSLFGTNTTSQTP. Positions 1 to 92 are disordered; that stretch reads MSLFGTNTTS…STTTTTSQPQ (92 aa). 12 GLFG repeats span residues 17 to 20, 45 to 48, 63 to 66, 79 to 82, 96 to 99, 111 to 114, 127 to 130, 142 to 145, 156 to 159, 168 to 171, 181 to 184, and 193 to 197; these read GLFG and GLFGQ. Low complexity predominate over residues 20 to 31; that stretch reads GTTTSQSAQTGS. Residues 32 to 74 are compositionally biased toward polar residues; that stretch reads LFGTATSQPQQTGGLFGSTATQTPSSQLQSTGLFGSTTATSQP. Positions 75–92 are enriched in low complexity; that stretch reads QQTGGLFGSTTTTTSQPQ. A disordered region spans residues 196 to 221; that stretch reads GQSTTQPQQQQNATPGLTMGQSTNTQ. Low complexity predominate over residues 197–206; it reads QSTTQPQQQQ. Positions 207-221 are enriched in polar residues; that stretch reads NATPGLTMGQSTNTQ. Coiled-coil stretches lie at residues 239-270 and 375-401; these read TRFN…EAVD and FSKT…AHLT.

It belongs to the nucleoporin GLFG family. As to quaternary structure, component of the nuclear pore complex (NPC). NPC constitutes the exclusive means of nucleocytoplasmic transport. NPCs allow the passive diffusion of ions and small molecules and the active, nuclear transport receptor-mediated bidirectional transport of macromolecules such as proteins, RNAs, ribonucleoparticles (RNPs), and ribosomal subunits across the nuclear envelope. Due to its 8-fold rotational symmetry, all subunits are present with 8 copies or multiples thereof.

The protein resides in the nucleus. Its subcellular location is the nuclear pore complex. It is found in the nucleus membrane. Functionally, functions as a component of the nuclear pore complex (NPC). NPC components, collectively referred to as nucleoporins (NUPs), can play the role of both NPC structural components and of docking or interaction partners for transiently associated nuclear transport factors. Active directional transport is assured by both, a Phe-Gly (FG) repeat affinity gradient for these transport factors across the NPC and a transport cofactor concentration gradient across the nuclear envelope (GSP1 and GSP2 GTPases associated predominantly with GTP in the nucleus, with GDP in the cytoplasm). NUP49 plays an important role in several nuclear transport pathways including poly(A)+ RNA, tRNA, and pre-ribosome transport. The sequence is that of Nucleoporin NUP49 (NUP49) from Chaetomium thermophilum (strain DSM 1495 / CBS 144.50 / IMI 039719) (Thermochaetoides thermophila).